We begin with the raw amino-acid sequence, 201 residues long: Holliday junction branch migration complex subunit RuvA (201 aa).

Positions 1 to 64 (MYEYIRGQFQ…EDFIGLYGFT (64 aa)) are domain I. The interval 65 to 143 (TREELEMFKL…PDELTSEEGQ (79 aa)) is domain II. Residues 144–152 (LIEGINDNS) are flexible linker. The domain III stretch occupies residues 153–201 (DYSFNINETLSALMALGYTEKEAQKALEKVDKTLSIENMIKESLKLLMR).

It belongs to the RuvA family. In terms of assembly, homotetramer. Forms an RuvA(8)-RuvB(12)-Holliday junction (HJ) complex. HJ DNA is sandwiched between 2 RuvA tetramers; dsDNA enters through RuvA and exits via RuvB. An RuvB hexamer assembles on each DNA strand where it exits the tetramer. Each RuvB hexamer is contacted by two RuvA subunits (via domain III) on 2 adjacent RuvB subunits; this complex drives branch migration. In the full resolvosome a probable DNA-RuvA(4)-RuvB(12)-RuvC(2) complex forms which resolves the HJ.

The protein localises to the cytoplasm. Its function is as follows. The RuvA-RuvB-RuvC complex processes Holliday junction (HJ) DNA during genetic recombination and DNA repair, while the RuvA-RuvB complex plays an important role in the rescue of blocked DNA replication forks via replication fork reversal (RFR). RuvA specifically binds to HJ cruciform DNA, conferring on it an open structure. The RuvB hexamer acts as an ATP-dependent pump, pulling dsDNA into and through the RuvAB complex. HJ branch migration allows RuvC to scan DNA until it finds its consensus sequence, where it cleaves and resolves the cruciform DNA. In Clostridium perfringens (strain 13 / Type A), this protein is Holliday junction branch migration complex subunit RuvA.